Here is an 89-residue protein sequence, read N- to C-terminus: Large ribosomal subunit protein bL27 (89 aa).

The interval 1 to 23 (MAHKKAGGSSRNGRDSAGKRLGI) is disordered.

This sequence belongs to the bacterial ribosomal protein bL27 family.

The sequence is that of Large ribosomal subunit protein bL27 from Rhodopseudomonas palustris (strain BisA53).